Consider the following 194-residue polypeptide: Ras-like protein RAS1 (194 aa).

Position 16–23 (16–23) interacts with GTP; the sequence is GAGGVGKS. The Effector region signature appears at 38–46; it reads YDPTIEDSY. GTP is bound by residues 63-67 and 122-125; these read DTAGQ and NKVD. Cysteine 191 bears the Cysteine methyl ester mark. The S-geranylgeranyl cysteine moiety is linked to residue cysteine 191. Positions 192 to 194 are cleaved as a propeptide — removed in mature form; the sequence is TLL.

Belongs to the small GTPase superfamily. Ras family.

The protein resides in the cell membrane. The catalysed reaction is GTP + H2O = GDP + phosphate + H(+). With respect to regulation, alternates between an inactive form bound to GDP and an active form bound to GTP. Activated by a guanine nucleotide-exchange factor (GEF) and inactivated by a GTPase-activating protein (GAP). In terms of biological role, ras proteins bind GDP/GTP and possess intrinsic GTPase activity. The chain is Ras-like protein RAS1 (RAS1) from Hydra vulgaris (Hydra).